The primary structure comprises 239 residues: Small ribosomal subunit protein uS2 (239 aa).

It belongs to the universal ribosomal protein uS2 family.

The polypeptide is Small ribosomal subunit protein uS2 (Histophilus somni (strain 129Pt) (Haemophilus somnus)).